The sequence spans 777 residues: Ral guanine nucleotide dissociation stimulator-like 2 (777 aa).

The tract at residues Met1–Pro54 is disordered. A Phosphoserine modification is found at Ser13. Residues Gly31–Gly42 are compositionally biased toward gly residues. Over residues Gln43–Pro54 the composition is skewed to acidic residues. Positions Ser88 to Arg212 constitute an N-terminal Ras-GEF domain. The Ras-GEF domain occupies Leu243 to Pro513. Ser409 is subject to Phosphoserine. Low complexity-rich tracts occupy residues Ser581–Pro610 and Ala618–Ser632. Disordered stretches follow at residues Ser581–Pro644 and Arg734–Lys766. A compositionally biased stretch (gly residues) spans Gly633 to Pro644. Residues Asp648–Arg735 form the Ras-associating domain. A compositionally biased stretch (low complexity) spans Thr740–Ser755.

As to quaternary structure, interacts with SAMD9.

Probable guanine nucleotide exchange factor. Putative effector of Ras and/or Rap. Associates with the GTP-bound form of Rap 1A and H-Ras in vitro. This Homo sapiens (Human) protein is Ral guanine nucleotide dissociation stimulator-like 2 (RGL2).